We begin with the raw amino-acid sequence, 596 residues long: Elongation factor 4 (596 aa).

The 183-residue stretch at 2 to 184 (KHIRNFSIIA…EIVAKIPPPV (183 aa)) folds into the tr-type G domain. GTP contacts are provided by residues 14–19 (DHGKST) and 131–134 (NKID).

Belongs to the TRAFAC class translation factor GTPase superfamily. Classic translation factor GTPase family. LepA subfamily.

It is found in the cell inner membrane. The enzyme catalyses GTP + H2O = GDP + phosphate + H(+). In terms of biological role, required for accurate and efficient protein synthesis under certain stress conditions. May act as a fidelity factor of the translation reaction, by catalyzing a one-codon backward translocation of tRNAs on improperly translocated ribosomes. Back-translocation proceeds from a post-translocation (POST) complex to a pre-translocation (PRE) complex, thus giving elongation factor G a second chance to translocate the tRNAs correctly. Binds to ribosomes in a GTP-dependent manner. This Shewanella denitrificans (strain OS217 / ATCC BAA-1090 / DSM 15013) protein is Elongation factor 4.